A 214-amino-acid chain; its full sequence is NAD(P)H-quinone oxidoreductase subunit 6, chloroplastic (214 aa).

The next 5 membrane-spanning stretches (helical) occupy residues 10 to 30, 32 to 52, 61 to 81, 102 to 122, and 163 to 183; these read FSLFFLEGAVLVGALGVVLLP, ILYSAFLLGGVLMSIAGIYLL, AQVLIYVGAINVLILFAIMLV, IIGLTCIGLAGFLIDMIVTTP, and LLPFEVISLLLLVTLVGAIVI.

Belongs to the complex I subunit 6 family. As to quaternary structure, NDH is composed of at least 16 different subunits, 5 of which are encoded in the nucleus.

Its subcellular location is the plastid. The protein localises to the chloroplast thylakoid membrane. It carries out the reaction a plastoquinone + NADH + (n+1) H(+)(in) = a plastoquinol + NAD(+) + n H(+)(out). The enzyme catalyses a plastoquinone + NADPH + (n+1) H(+)(in) = a plastoquinol + NADP(+) + n H(+)(out). In terms of biological role, NDH shuttles electrons from NAD(P)H:plastoquinone, via FMN and iron-sulfur (Fe-S) centers, to quinones in the photosynthetic chain and possibly in a chloroplast respiratory chain. The immediate electron acceptor for the enzyme in this species is believed to be plastoquinone. Couples the redox reaction to proton translocation, and thus conserves the redox energy in a proton gradient. The chain is NAD(P)H-quinone oxidoreductase subunit 6, chloroplastic (ndhG) from Chlorokybus atmophyticus (Soil alga).